An 88-amino-acid chain; its full sequence is Small ribosomal subunit protein uS15c (88 aa).

This sequence belongs to the universal ribosomal protein uS15 family. As to quaternary structure, part of the 30S ribosomal subunit.

It localises to the plastid. The protein localises to the chloroplast. In Crucihimalaya wallichii (Rock-cress), this protein is Small ribosomal subunit protein uS15c (rps15).